A 589-amino-acid polypeptide reads, in one-letter code: Aspartate--tRNA ligase (589 aa).

Position 174 (Glu-174) interacts with L-aspartate. Residues 198–201 are aspartate; that stretch reads QLFK. Position 220 (Arg-220) interacts with L-aspartate. ATP is bound by residues 220 to 222 and Gln-229; that span reads RDE. Residue His-448 participates in L-aspartate binding. ATP is bound at residue Glu-483. Arg-490 contacts L-aspartate. 535-538 lines the ATP pocket; sequence GIDR.

The protein belongs to the class-II aminoacyl-tRNA synthetase family. Type 1 subfamily. As to quaternary structure, homodimer.

Its subcellular location is the cytoplasm. It catalyses the reaction tRNA(Asp) + L-aspartate + ATP = L-aspartyl-tRNA(Asp) + AMP + diphosphate. In terms of biological role, catalyzes the attachment of L-aspartate to tRNA(Asp) in a two-step reaction: L-aspartate is first activated by ATP to form Asp-AMP and then transferred to the acceptor end of tRNA(Asp). This is Aspartate--tRNA ligase from Xylella fastidiosa (strain M23).